A 256-amino-acid chain; its full sequence is uncharacterized protein (256 aa).

2 disordered regions span residues 1-171 (MARG…QLKH) and 185-256 (NGQR…LYND). The stretch at 14–39 (KRRSKVQEEEEHVEGSEEEVEEPEQK) forms a coiled coil. 2 stretches are compositionally biased toward acidic residues: residues 21–35 (EEEEHVEGSEEEVEE) and 64–92 (SDDDDEDDLSELDVVVEDDNPVETSDNDE). Positions 108 to 129 (NRGDHESHDDNSDNEEQGDRGN) are enriched in basic and acidic residues. The segment covering 192–205 (KRGGPPRGSFGQRG) has biased composition (gly residues). Positions 219–234 (RQGDTRDTRDTRDTRL) are enriched in basic and acidic residues.

This is an uncharacterized protein from Acanthamoeba polyphaga (Amoeba).